The sequence spans 188 residues: Crossover junction endodeoxyribonuclease RuvC (188 aa).

Active-site residues include D7, E68, and D141. The Mg(2+) site is built by D7, E68, and D141.

Belongs to the RuvC family. As to quaternary structure, homodimer which binds Holliday junction (HJ) DNA. The HJ becomes 2-fold symmetrical on binding to RuvC with unstacked arms; it has a different conformation from HJ DNA in complex with RuvA. In the full resolvosome a probable DNA-RuvA(4)-RuvB(12)-RuvC(2) complex forms which resolves the HJ. It depends on Mg(2+) as a cofactor.

The protein localises to the cytoplasm. The catalysed reaction is Endonucleolytic cleavage at a junction such as a reciprocal single-stranded crossover between two homologous DNA duplexes (Holliday junction).. In terms of biological role, the RuvA-RuvB-RuvC complex processes Holliday junction (HJ) DNA during genetic recombination and DNA repair. Endonuclease that resolves HJ intermediates. Cleaves cruciform DNA by making single-stranded nicks across the HJ at symmetrical positions within the homologous arms, yielding a 5'-phosphate and a 3'-hydroxyl group; requires a central core of homology in the junction. The consensus cleavage sequence is 5'-(A/T)TT(C/G)-3'. Cleavage occurs on the 3'-side of the TT dinucleotide at the point of strand exchange. HJ branch migration catalyzed by RuvA-RuvB allows RuvC to scan DNA until it finds its consensus sequence, where it cleaves and resolves the cruciform DNA. The sequence is that of Crossover junction endodeoxyribonuclease RuvC from Streptomyces coelicolor (strain ATCC BAA-471 / A3(2) / M145).